A 633-amino-acid chain; its full sequence is NBPF family member NBPF3 (633 aa).

The segment at 15–52 is disordered; it reads RGPDVETSPFGAPRAASHGVGRHQELRDPTVPGPTSSA. Positions 127–186 form a coiled coil; that stretch reads LRDERLLTEEKLAEELGQAEELRQYKVLVHSQERELTQLREKLQEGRDASRSLNQHLQAL. 5 consecutive Olduvai domains span residues 221–313, 314–402, 405–460, 461–552, and 555–633; these read ENDD…CIIP, ENES…ATSP, SREL…LDLD, RMKK…PPCP, and NEVL…IFPH. Residues 316-326 are compositionally biased toward basic and acidic residues; that stretch reads ESDHEQEEEKG. Residues 316–370 are disordered; that stretch reads ESDHEQEEEKGPVSPRNLQESEEEEAPQESWDEGDWTLSIPPDMSASYQSDRSTF. Over residues 335–350 the composition is skewed to acidic residues; the sequence is ESEEEEAPQESWDEGD. The segment at 463 to 484 is disordered; that stretch reads KKDQEEEEDQGPPCPRLSRELP.

Belongs to the NBPF family. In terms of tissue distribution, expressed in testis and fetal heart, as well as in non small cell lung carcinoma and neuroblastoma cell line.

It localises to the cytoplasm. The protein is NBPF family member NBPF3 of Homo sapiens (Human).